Here is a 399-residue protein sequence, read N- to C-terminus: Bombesin receptor subtype-3 (399 aa).

Topologically, residues 1–41 (MSQKQPQSPNQTLISITNDTESSSSVVSNDTTNKGWTGDNS) are extracellular. 2 N-linked (GlcNAc...) asparagine glycosylation sites follow: N10 and N18. Residues 42–63 (PGIEALCAIYITYAVIISVGIL) form a helical membrane-spanning segment. Over 64 to 82 (GNAILIKVFFKTKSMQTVP) the chain is Cytoplasmic. A helical membrane pass occupies residues 83 to 103 (NIFITSLALGDLLLLLTCVPV). Residues 104 to 121 (DATHYLAEGWLFGRIGCK) are Extracellular-facing. C120 and C203 are joined by a disulfide. The chain crosses the membrane as a helical span at residues 122 to 143 (VLSFIRLTSVGVSVFTLTILSA). Over 144 to 163 (DRYKAVVKPLERQPSNAILK) the chain is Cytoplasmic. The chain crosses the membrane as a helical span at residues 164–184 (TCAKAGCIWIMSMIFALPEAI). Over 185-220 (FSNVHTLRDPNKNMTSEWCAFYPVSEKLLQEIHALL) the chain is Extracellular. The helical transmembrane segment at 221–241 (SFLVFYIIPLSIISVYYSLIA) threads the bilayer. Over 242-272 (RTLYKSTLNIPTEEQSHARKQVESRKRIAKT) the chain is Cytoplasmic. A helical membrane pass occupies residues 273-293 (VLVLVALFALCWLPNHLLNLY). The Extracellular segment spans residues 294 to 313 (HSFTHKAYEDSSAIHFIVTI). The chain crosses the membrane as a helical span at residues 314–333 (FSRVLAFSNSCVNPFALYWL). Residues 334-399 (SKTFQKQFKA…RPMKKEENRV (66 aa)) lie on the Cytoplasmic side of the membrane. C347 carries the S-palmitoyl cysteine lipid modification.

The protein belongs to the G-protein coupled receptor 1 family. In terms of assembly, interacts with C6orf89. In terms of tissue distribution, mainly in uteri of pregnant animals.

Its subcellular location is the cell membrane. Functionally, role in sperm cell division, maturation, or function. The relative order of ligand affinity is GRP = neuromedin-C &gt;&gt; neuromedin-B. This receptor mediates its action by association with G proteins that activate a phosphatidylinositol-calcium second messenger system. In Cavia porcellus (Guinea pig), this protein is Bombesin receptor subtype-3 (BRS3).